The following is a 64-amino-acid chain: Large ribosomal subunit protein bL33 (64 aa).

A disordered region spans residues 19–40 (TSTDPKRSNGVSRYTTEKNRRN).

Belongs to the bacterial ribosomal protein bL33 family.

This chain is Large ribosomal subunit protein bL33, found in Prochlorococcus marinus (strain MIT 9215).